Reading from the N-terminus, the 396-residue chain is Acetate kinase (396 aa).

Mg(2+) is bound at residue Asn7. Lys14 serves as a coordination point for ATP. Arg91 contributes to the substrate binding site. The active-site Proton donor/acceptor is the Asp148. ATP-binding positions include His208 to Gly212, Asp283 to Arg285, and Gly331 to Asn335. Glu384 lines the Mg(2+) pocket.

Belongs to the acetokinase family. As to quaternary structure, homodimer. Mg(2+) serves as cofactor. Mn(2+) is required as a cofactor.

The protein resides in the cytoplasm. It catalyses the reaction acetate + ATP = acetyl phosphate + ADP. Its pathway is metabolic intermediate biosynthesis; acetyl-CoA biosynthesis; acetyl-CoA from acetate: step 1/2. In terms of biological role, catalyzes the formation of acetyl phosphate from acetate and ATP. Can also catalyze the reverse reaction. This is Acetate kinase from Desulforamulus reducens (strain ATCC BAA-1160 / DSM 100696 / MI-1) (Desulfotomaculum reducens).